Here is a 361-residue protein sequence, read N- to C-terminus: Deoxyhypusine hydroxylase (361 aa).

4 HEAT-like PBS-type repeats span residues 59–85 (LKHE…VLEN), 94–120 (VRHE…YMQD), 183–211 (QRYR…GFRD), and 216–242 (FRHE…RLRD). 4 residues coordinate Fe cation: histidine 61, glutamate 62, histidine 96, and glutamate 97. Residues histidine 218, glutamate 219, histidine 251, and glutamate 252 each contribute to the Fe cation site.

This sequence belongs to the deoxyhypusine hydroxylase family. The cofactor is Fe(2+).

The protein localises to the cytoplasm. It is found in the nucleus. The catalysed reaction is [eIF5A protein]-deoxyhypusine + AH2 + O2 = [eIF5A protein]-hypusine + A + H2O. It participates in protein modification; eIF5A hypusination. Its function is as follows. Catalyzes the hydroxylation of the N(6)-(4-aminobutyl)-L-lysine intermediate to form hypusine, an essential post-translational modification only found in mature eIF-5A factor. The chain is Deoxyhypusine hydroxylase from Cryptococcus neoformans var. neoformans serotype D (strain JEC21 / ATCC MYA-565) (Filobasidiella neoformans).